The sequence spans 1338 residues: Aldehyde oxidase (1338 aa).

Residues 5-92 (SELLFYVNGR…GAAVTTVEGI (88 aa)) enclose the 2Fe-2S ferredoxin-type domain. The [2Fe-2S] cluster site is built by C44, C49, C52, and C74. Q113 lines the Mo-molybdopterin pocket. Residues C114, C117, C149, and C151 each contribute to the [2Fe-2S] cluster site. C151 lines the Mo-molybdopterin pocket. The 186-residue stretch at 236–421 (FGSERMMWFS…VSVNIPYSRK (186 aa)) folds into the FAD-binding PCMH-type domain. FAD is bound by residues 264–271 (VIMGNTSV), A345, S354, H358, D367, and L411. Mo-molybdopterin contacts are provided by residues 806 to 807 (AF) and M1047. S1068 carries the phosphoserine modification. Mo-molybdopterin-binding positions include 1088 to 1091 (GSVV), Q1203, and L1268. Residue E1270 is the Proton acceptor; for azaheterocycle hydroxylase activity of the active site.

Belongs to the xanthine dehydrogenase family. In terms of assembly, homodimer. [2Fe-2S] cluster serves as cofactor. Requires FAD as cofactor. Mo-molybdopterin is required as a cofactor. As to expression, abundant in liver, expressed in adipose tissue and at lower levels in lung, skeletal muscle, pancreas. In contrast to mice, no significant gender difference in AOX1 expression level (at protein level).

It localises to the cytoplasm. The enzyme catalyses an aldehyde + O2 + H2O = a carboxylate + H2O2 + H(+). It catalyses the reaction retinal + O2 + H2O = retinoate + H2O2 + H(+). With respect to regulation, is very potently inhibited by raloxifene. Also inhibited by estradiol, ethinyl estradiol, hydralazine, menadione, isovanillin and thioridazine. Not inhibited by allopurinol, a xanthine dehydrogenase potent inhibitor. Oxidase with broad substrate specificity, oxidizing aromatic azaheterocycles, such as N1-methylnicotinamide, N-methylphthalazinium and phthalazine, as well as aldehydes, such as benzaldehyde, retinal, pyridoxal, and vanillin. Plays a key role in the metabolism of xenobiotics and drugs containing aromatic azaheterocyclic substituents. Participates in the bioactivation of prodrugs such as famciclovir, catalyzing the oxidation step from 6-deoxypenciclovir to penciclovir, which is a potent antiviral agent. Is probably involved in the regulation of reactive oxygen species homeostasis. May be a prominent source of superoxide generation via the one-electron reduction of molecular oxygen. May also catalyze nitric oxide (NO) production via the reduction of nitrite to NO with NADH or aldehyde as electron donor. May play a role in adipogenesis. This Homo sapiens (Human) protein is Aldehyde oxidase.